We begin with the raw amino-acid sequence, 253 residues long: MKFAIETINLHVYYGRNHVLRGINLQIPQRGIFAIMGPSGCGKSTLLRTFNRLIELNQDARVEGEVRIFGKNIYSEDVDPIEVRKKVGMVFQYPNPFPHLTIYENVAIGVKLNKLVKSQKELDERVRWALKKAALWEEVKDRLNDYPGNLSGGQRQRLVIARVLAMKPDILLMDEPTANIDPVGTAKIEELLLELKTDYTIVLVTHSPAQAARIADYVAFLYLGKLIEVGPTRKVFENPEHELTEKYVTGALG.

Residues 5 to 248 enclose the ABC transporter domain; it reads IETINLHVYY…PEHELTEKYV (244 aa). 37–44 is a binding site for ATP; that stretch reads GPSGCGKS.

This sequence belongs to the ABC transporter superfamily. Phosphate importer (TC 3.A.1.7) family. The complex is composed of two ATP-binding proteins (PstB), two transmembrane proteins (PstC and PstA) and a solute-binding protein (PstS).

The protein localises to the cell membrane. It catalyses the reaction phosphate(out) + ATP + H2O = ADP + 2 phosphate(in) + H(+). Its function is as follows. Part of the ABC transporter complex PstSACB involved in phosphate import. Responsible for energy coupling to the transport system. This Pyrococcus furiosus (strain ATCC 43587 / DSM 3638 / JCM 8422 / Vc1) protein is Phosphate import ATP-binding protein PstB.